Consider the following 422-residue polypeptide: Mannose-1-phosphate guanylyltransferase regulatory subunit alpha-A (422 aa).

The segment at 2–253 is substrate-binding domain; that stretch reads LKAVILIGGP…DRFWSQIKSA (252 aa). Positions 85 and 249 each coordinate GDP-alpha-D-mannose. Residues 275–422 form a hexapeptide repeat domain region; that stretch reads LATNTEGGAK…NRSFKNQIIL (148 aa). The tract at residues 358–386 is C-loop; the sequence is TPSDPNPNDPYAKIDSETLFRDGKLTPSI.

Belongs to the transferase hexapeptide repeat family. Component of the GMPPA-GMPPB mannose-1-phosphate guanylyltransferase complex composed of 4 gmppa subunits and 8 gmppb subunits; the complex is organized into three layers, a central layer made up of 2 gmppa dimers sandwiched between two layers each made up of 2 gmppb dimers.

It participates in nucleotide-sugar biosynthesis; GDP-alpha-D-mannose biosynthesis; GDP-alpha-D-mannose from alpha-D-mannose 1-phosphate (GTP route): step 1/1. Its function is as follows. Regulatory subunit of the GMPPA-GMPPB mannose-1-phosphate guanylyltransferase complex; reduces the catalytic activity of GMPPB when part of the complex. Mediates allosteric feedback inhibition of GMPPB catalytic activity upon binding GDP-alpha-D-mannose. Together with GMPPB regulates GDP-alpha-D-mannose levels. One of two paralogs (gmppaa and gmppab) that may have redundant functions. In Danio rerio (Zebrafish), this protein is Mannose-1-phosphate guanylyltransferase regulatory subunit alpha-A (gmppaa).